A 1197-amino-acid polypeptide reads, in one-letter code: DNA-directed RNA polymerase subunit beta (1197 aa).

A compositionally biased stretch (basic and acidic residues) spans 1172–1185 (KEQEEKKAQQEAEK). Residues 1172–1197 (KEQEEKKAQQEAEKAQAASAEDPSAE) are disordered. A compositionally biased stretch (low complexity) spans 1186–1197 (AQAASAEDPSAE).

It belongs to the RNA polymerase beta chain family. In terms of assembly, the RNAP catalytic core consists of 2 alpha, 1 beta, 1 beta' and 1 omega subunit. When a sigma factor is associated with the core the holoenzyme is formed, which can initiate transcription.

It catalyses the reaction RNA(n) + a ribonucleoside 5'-triphosphate = RNA(n+1) + diphosphate. In terms of biological role, DNA-dependent RNA polymerase catalyzes the transcription of DNA into RNA using the four ribonucleoside triphosphates as substrates. The protein is DNA-directed RNA polymerase subunit beta of Latilactobacillus sakei subsp. sakei (strain 23K) (Lactobacillus sakei subsp. sakei).